The chain runs to 301 residues: Acetyl-coenzyme A carboxylase carboxyl transferase subunit beta (301 aa).

Residues 23–292 enclose the CoA carboxyltransferase N-terminal domain; that stretch reads VWTKCDSCGQ…PSPDEPRESV (270 aa). Zn(2+) contacts are provided by Cys27, Cys30, Cys46, and Cys49. The C4-type zinc finger occupies 27-49; it reads CDSCGQVLYRAELERNLEVCPKC. The disordered stretch occupies residues 280-301; sequence LPAPSPDEPRESVVVPDQEPEA.

Belongs to the AccD/PCCB family. Acetyl-CoA carboxylase is a heterohexamer composed of biotin carboxyl carrier protein (AccB), biotin carboxylase (AccC) and two subunits each of ACCase subunit alpha (AccA) and ACCase subunit beta (AccD). It depends on Zn(2+) as a cofactor.

It is found in the cytoplasm. The enzyme catalyses N(6)-carboxybiotinyl-L-lysyl-[protein] + acetyl-CoA = N(6)-biotinyl-L-lysyl-[protein] + malonyl-CoA. It functions in the pathway lipid metabolism; malonyl-CoA biosynthesis; malonyl-CoA from acetyl-CoA: step 1/1. Its function is as follows. Component of the acetyl coenzyme A carboxylase (ACC) complex. Biotin carboxylase (BC) catalyzes the carboxylation of biotin on its carrier protein (BCCP) and then the CO(2) group is transferred by the transcarboxylase to acetyl-CoA to form malonyl-CoA. In Enterobacter sp. (strain 638), this protein is Acetyl-coenzyme A carboxylase carboxyl transferase subunit beta.